The chain runs to 421 residues: Aspartokinase (421 aa).

Residue 7–10 (KYGG) coordinates ATP. Substrate is bound at residue 25-30 (RIVATK). Serine 41 is an ATP binding site. Substrate is bound by residues 45 to 49 (DTTDD), glutamate 74, 125 to 126 (LE), 151 to 154 (RGGS), and serine 154. ATP is bound by residues 174 to 175 (TD), 180 to 185 (FSADPR), and lysine 210. ACT domains follow at residues 267 to 348 (VTIV…GKVS) and 349 to 421 (LIGA…GTGR). Substrate is bound by residues aspartate 274, 274–279 (DIPGYA), 292–294 (NID), glutamine 298, 360–361 (VT), 374–375 (NI), and 381–382 (SE).

The protein belongs to the aspartokinase family. Heterotetramer consisting of 2 isoforms Alpha (catalytic and regulation) and of a homodimer of 2 isoforms Beta (regulation).

It carries out the reaction L-aspartate + ATP = 4-phospho-L-aspartate + ADP. It functions in the pathway amino-acid biosynthesis; L-lysine biosynthesis via DAP pathway; (S)-tetrahydrodipicolinate from L-aspartate: step 1/4. It participates in amino-acid biosynthesis; L-methionine biosynthesis via de novo pathway; L-homoserine from L-aspartate: step 1/3. Its pathway is amino-acid biosynthesis; L-threonine biosynthesis; L-threonine from L-aspartate: step 1/5. With respect to regulation, feedback inhibition by lysine and threonine. In terms of biological role, catalyzes the phosphorylation of the beta-carboxyl group of aspartic acid with ATP to yield 4-phospho-L-aspartate, which is involved in the branched biosynthetic pathway leading to the biosynthesis of amino acids lysine, threonine, isoleucine and methionine. The protein is Aspartokinase (ask) of Mycobacterium bovis (strain ATCC BAA-935 / AF2122/97).